The following is a 206-amino-acid chain: Ribonuclease HII (206 aa).

The RNase H type-2 domain maps to 22-206 (RFICGVDEAG…ISFLKNILSL (185 aa)). Residues Asp28, Glu29, and Asp120 each coordinate a divalent metal cation.

The protein belongs to the RNase HII family. It depends on Mn(2+) as a cofactor. The cofactor is Mg(2+).

Its subcellular location is the cytoplasm. It carries out the reaction Endonucleolytic cleavage to 5'-phosphomonoester.. Functionally, endonuclease that specifically degrades the RNA of RNA-DNA hybrids. The protein is Ribonuclease HII of Caldicellulosiruptor bescii (strain ATCC BAA-1888 / DSM 6725 / KCTC 15123 / Z-1320) (Anaerocellum thermophilum).